Consider the following 1665-residue polypeptide: Protein scribble homolog (1665 aa).

Positions Met-1–Glu-804 are sufficient for targeting to adherens junction and to inhibit cell proliferation. Ser-37 is modified (phosphoserine). LRR repeat units follow at residues Ser-37–Leu-58, Asn-60–Phe-81, Gln-83–Cys-104, Ala-106–Leu-127, Ser-129–Leu-150, Asn-152–Val-174, Lys-175–Pro-197, Asn-198–Leu-219, Arg-221–Ala-243, Leu-244–Leu-265, Gln-267–Cys-288, Asn-290–Thr-312, Lys-313–Cys-334, Ala-336–Thr-357, Glu-359–Asn-381, and Leu-382–Asp-402. Position 378 is a phosphothreonine (Thr-378). Disordered regions lie at residues Pro-422–Ile-615 and Arg-635–Ser-689. Residues Gly-428–Cys-437 show a composition bias toward polar residues. Acidic residues predominate over residues Asp-452–Ala-463. A coiled-coil region spans residues Glu-455–Thr-475. Residue Thr-475 is modified to Phosphothreonine. Composition is skewed to basic and acidic residues over residues Ser-479 to Glu-494 and Phe-570 to Asp-580. A Phosphoserine modification is found at Ser-583. Positions Arg-653 to Ala-687 form a coiled coil. The span at Glu-657–Glu-681 shows a compositional bias: acidic residues. Phosphothreonine occurs at positions 674 and 675. A phosphoserine mark is found at Ser-694 and Ser-750. Residues Ile-703 to Arg-1215 are interaction with ARHGEF7. The PDZ 1 domain maps to Thr-714 to Arg-801. The interval Thr-714 to Thr-1180 is required for interaction with VIM. Phosphothreonine is present on Thr-812. Phosphoserine is present on residues Ser-821, Ser-861, and Ser-925. PDZ domains lie at Ala-848–Thr-936, Glu-990–Pro-1079, and Glu-1086–Thr-1180. Ser-1126, Ser-1206, Ser-1209, Ser-1212, Ser-1218, Ser-1262, Ser-1265, and Ser-1284 each carry phosphoserine. The span at Ile-1213–Leu-1228 shows a compositional bias: basic and acidic residues. A disordered region spans residues Ile-1213–Asn-1246. 2 disordered regions span residues Ala-1263–Pro-1325 and Val-1341–Arg-1501. Over residues Gly-1264–Lys-1277 the composition is skewed to polar residues. At Lys-1291 the chain carries Omega-N-methylarginine. Phosphoserine is present on Ala-1299. Arg-1312 carries the post-translational modification Omega-N-methylarginine. Ser-1320 is modified (phosphoserine). Thr-1353 carries the post-translational modification Phosphothreonine. A Phosphoserine modification is found at Ser-1359. Over residues Ser-1364 to Val-1376 the composition is skewed to basic and acidic residues. At Ser-1389 the chain carries Phosphoserine. Residues Leu-1390 to Thr-1421 are a coiled coil. Basic and acidic residues predominate over residues Asp-1394–Lys-1406. 2 positions are modified to phosphoserine: Ser-1455 and Ser-1458. Over residues Ala-1471–Arg-1482 the composition is skewed to basic and acidic residues. Phosphoserine occurs at positions 1485, 1496, and 1518. Residues Leu-1530–Leu-1577 are disordered. Residues Gln-1534 to Ala-1547 are compositionally biased toward basic and acidic residues. Phosphoserine is present on Ser-1551. Phosphothreonine is present on Thr-1555. Ser-1557, Ser-1571, and Ser-1601 each carry phosphoserine. Residues Gly-1632 to Ser-1665 are disordered.

The protein belongs to the LAP (LRR and PDZ) protein family. In terms of assembly, interacts with UBE3A. Interacts with PAK1 and PAK2. Interacts (via PDZ domains) with VANGL2. Interacts (via PDZ domains) with LPP and TRIP6; the interaction is direct. Interacts (via PDZ domains) with TJP2. Interacts (via PDZ domains) with APC; may mediate APC targeting to adherens junctions of epithelial cells. Interacts (via PDZ domains) with TSHR; regulates TSHR trafficking and function. Interacts with ARHGEF7 and GIT1; interacts directly with ARHGEF7. Interacts with CTNNB1. Interacts with MAPK12. Interacts (via PDZ domains 1 and 3) with MCC. Interacts with DLG5. Interacts with STK4/MST1 and LATS1 in the presence of DLG5. Interacts (via PDZ domain 3) with CRTAM (via PDZ-binding motif); the interaction promotes CRTAM and SCRIB polarization in a subset of CD4+ T-cells. Interacts with YES1, when YES1 is in a closed conformation; the interaction facilitates YES1 autophosphorylation. Interacts (via PDZ domains) with VIM; the interaction protects SCRIB from proteasomal degradation and facilitates SCRIB localization to intermediate filaments, the interaction is reduced by cell contact inhibition. In terms of processing, ubiquitinated; targeted for UBE3A-dependent multiubiquitination and degraded. Palmitoylated. Could be depalmitoylated by LYPLA1 and/or LYPLA2. Palmitoylation of SCRIB by ZDHHC7 is required for its localization to cell-cell junctions, function in the establishement of epithelial cell polarity and the regulation of downstream signaling pathways important for epithelial cell differentiation. In terms of tissue distribution, expressed in CD4+ T-cells (at protein level). Found in a wide range of tissues including liver, kidney and spleen. Also expressed in the brain (at protein level).

Its subcellular location is the cell membrane. The protein localises to the cell junction. The protein resides in the adherens junction. It is found in the cell projection. It localises to the lamellipodium. Its subcellular location is the cytoplasm. The protein localises to the postsynapse. The protein resides in the presynapse. In terms of biological role, scaffold protein involved in different aspects of polarized cell differentiation regulating epithelial and neuronal morphogenesis and T-cell polarization. Via its interaction with CRTAM, required for the late phase polarization of a subset of CD4+ T-cells, which in turn regulates TCR-mediated proliferation and IFNG and IL22 production. Plays a role in cell directional movement, cell orientation, cell sheet organization and Golgi complex polarization at the cell migration front. Promotes epithelial cell layer barrier function via maintaining cell-cell adhesion. Most probably functions in the establishment of apico-basal cell polarity. May function in cell proliferation regulating progression from G1 to S phase and as a positive regulator of apoptosis for instance during acinar morphogenesis of the mammary epithelium. May regulate cell invasion via MAPK-mediated cell migration and adhesion. May play a role in exocytosis and in the targeting of synaptic vesicles to synapses. Functions as an activator of Rac GTPase activity. In Mus musculus (Mouse), this protein is Protein scribble homolog.